The chain runs to 251 residues: GTP cyclohydrolase 1 type 2 homolog (251 aa).

Residues H64, H65, D102, H219, and E223 each coordinate a divalent metal cation.

It belongs to the GTP cyclohydrolase I type 2/NIF3 family. Homohexamer.

The sequence is that of GTP cyclohydrolase 1 type 2 homolog from Chlamydia muridarum (strain MoPn / Nigg).